The following is a 248-amino-acid chain: CKLF-like MARVEL transmembrane domain-containing protein 2 (248 aa).

A disordered region spans residues 1-63; the sequence is MAPKAAKGAK…KAVQPKHEVG (63 aa). Residues 12-22 show a composition bias toward pro residues; the sequence is EPAPAPPPPGA. Basic and acidic residues predominate over residues 23–63; the sequence is KPEEDKKDGKEPSDKPQKAVQDHKEPSDKPQKAVQPKHEVG. An MARVEL domain is found at 82–204; it reads FWLLGHAEIK…DVCLQRNHFR (123 aa). 3 helical membrane passes run 116 to 136, 147 to 167, and 178 to 198; these read LIIT…SFAI, ISDL…VVFA, and YLLA…DVCL. A disordered region spans residues 208-248; sequence AKKHMLVPPPGKEKGPQQGKGPEPAKPPEPGKPPGPAKGKK. Over residues 231–248 the composition is skewed to pro residues; the sequence is PAKPPEPGKPPGPAKGKK.

This sequence belongs to the chemokine-like factor family. As to expression, highly expressed in testis.

Its subcellular location is the membrane. This is CKLF-like MARVEL transmembrane domain-containing protein 2 (CMTM2) from Homo sapiens (Human).